We begin with the raw amino-acid sequence, 1023 residues long: uncharacterized protein (1023 aa).

Residues 1-35 are disordered; that stretch reads MAEKRPLGPLGPMMYGKLPRLEPDPGPGHSLPLSA. Position 17 is an N6-acetyllysine (Lys17). Ser206 and Ser383 each carry phosphoserine. Disordered stretches follow at residues 381 to 501, 518 to 551, 703 to 742, 907 to 980, and 1002 to 1023; these read GASP…PVID, PEPR…ASRS, PAPA…PEQH, EART…TLRA, and KASG…THHL. Thr389 carries the post-translational modification Phosphothreonine. The span at 391–400 shows a compositional bias: polar residues; the sequence is PSHSQNSVQP. Composition is skewed to basic and acidic residues over residues 425-436, 443-454, and 477-490; these read RPAEKPTPEAQE, CRKEQLQPRPNE, and CAKE…KDAR. Phosphoserine is present on residues Ser493 and Ser494. Over residues 706-722 the composition is skewed to pro residues; the sequence is ASAPPPSPAPAPAPASG. Phosphoserine occurs at positions 912, 964, and 972. Low complexity predominate over residues 963-972; it reads PSPSSGASTS.

This is an uncharacterized protein from Mus musculus (Mouse).